The primary structure comprises 126 residues: Small nuclear ribonucleoprotein Sm D3 (126 aa).

S2 carries the post-translational modification N-acetylserine. Positions 5-77 (VPIKVLHEAE…IRFLILPDML (73 aa)) constitute a Sm domain. A run of 5 repeats spans residues 110–111 (RG), 112–113 (RG), 114–115 (RG), 116–117 (MG), and 118–119 (RG). Positions 110–119 (RGRGRGMGRG) are 5 X 2 AA tandem repeats of [RM]-G; required for interaction with SMN1.

This sequence belongs to the snRNP core protein family. As to quaternary structure, core component of the spliceosomal U1, U2, U4 and U5 small nuclear ribonucleoproteins (snRNPs), the building blocks of the spliceosome. Most spliceosomal snRNPs contain a common set of Sm proteins, SNRPB, SNRPD1, SNRPD2, SNRPD3, SNRPE, SNRPF and SNRPG that assemble in a heptameric protein ring on the Sm site of the small nuclear RNA to form the core snRNP. Component of the U1 snRNP. The U1 snRNP is composed of the U1 snRNA and the 7 core Sm proteins SNRPB, SNRPD1, SNRPD2, SNRPD3, SNRPE, SNRPF and SNRPG, and at least three U1 snRNP-specific proteins SNRNP70/U1-70K, SNRPA/U1-A and SNRPC/U1-C. Component of the U4/U6-U5 tri-snRNP complex composed of the U4, U6 and U5 snRNAs and at least PRPF3, PRPF4, PRPF6, PRPF8, PRPF31, SNRNP200, TXNL4A, SNRNP40, SNRPB, SNRPD1, SNRPD2, SNRPD3, SNRPE, SNRPF, SNRPG, DDX23, CD2BP2, PPIH, SNU13, EFTUD2, SART1 and USP39, plus LSM2, LSM3, LSM4, LSM5, LSM6, LSM7 and LSM8. Component of the U7 snRNP complex, or U7 Sm protein core complex, that is composed of the U7 snRNA and at least LSM10, LSM11, SNRPB, SNRPD3, SNRPE, SNRPF and SNRPG; the complex does not contain SNRPD1 and SNRPD2. Component of the minor spliceosome, which splices U12-type introns. Part of the SMN-Sm complex that contains SMN1, GEMIN2/SIP1, DDX20/GEMIN3, GEMIN4, GEMIN5, GEMIN6, GEMIN7, GEMIN8, STRAP/UNRIP and the Sm proteins SNRPB, SNRPD1, SNRPD2, SNRPD3, SNRPE, SNRPF and SNRPG; catalyzes core snRNPs assembly. Forms a 6S pICln-Sm complex composed of CLNS1A/pICln, SNRPD1, SNRPD2, SNRPE, SNRPF and SNRPG; ring-like structure where CLNS1A/pICln mimics additional Sm proteins and which is unable to assemble into the core snRNP. Interacts (via C-terminus) with SMN1 (via Tudor domain); the interaction is direct. Post-translationally, methylated on arginine residues by PRMT5 and PRMT7; probable asymmetric dimethylation which is required for assembly and biogenesis of snRNPs.

It localises to the cytoplasm. Its subcellular location is the cytosol. The protein resides in the nucleus. In terms of biological role, plays a role in pre-mRNA splicing as a core component of the spliceosomal U1, U2, U4 and U5 small nuclear ribonucleoproteins (snRNPs), the building blocks of the spliceosome. Component of both the pre-catalytic spliceosome B complex and activated spliceosome C complexes. As a component of the minor spliceosome, involved in the splicing of U12-type introns in pre-mRNAs. As part of the U7 snRNP it is involved in histone pre-mRNA 3'-end processing. The sequence is that of Small nuclear ribonucleoprotein Sm D3 (SNRPD3) from Homo sapiens (Human).